A 1193-amino-acid chain; its full sequence is Cysteine protease ATG4 (1193 aa).

2 disordered regions span residues 23–284 (AAIA…NKMS) and 358–474 (WRPI…KKKS). The segment covering 35-49 (NLPPPPPPDRIPPPK) has biased composition (pro residues). A compositionally biased stretch (basic residues) spans 50 to 59 (GRSHQQKFKI). Composition is skewed to basic and acidic residues over residues 60-72 (LRKEKDKDRRQPI), 117-127 (ANREEKKEKTS), and 140-153 (FGRDKDKDRGKPEE). Positions 170-185 (SSSTSTDSTTSRSITS) are enriched in low complexity. Residues 186 to 205 (AFTRQNSIQSRRSPRTSFGQ) show a composition bias toward polar residues. A compositionally biased stretch (low complexity) spans 227-238 (SSTTSHDPSSDP). 3 stretches are compositionally biased toward polar residues: residues 253-262 (QGASMSSLSR), 270-284 (GGTSRSPDTFPNKMS), and 389-447 (LSMN…STLS). Cysteine 570 serves as the catalytic Nucleophile. Active-site residues include aspartate 789 and histidine 791. 3 disordered regions span residues 807–869 (HSAK…SKYK), 899–924 (VPKSSFESNGAAQEQPKKQKGFTSTA), and 1000–1171 (QDEM…PARN). Positions 835–846 (RTPETPRSTTPS) are enriched in low complexity. 2 stretches are compositionally biased toward acidic residues: residues 1004 to 1029 (PSWEEDDDAGLESVSEPDFEGDEFEE) and 1070 to 1084 (HLDVEEANSTDDDNE). 2 stretches are compositionally biased toward basic and acidic residues: residues 1097–1112 (IARHLNRVDLSSKREQ) and 1152–1164 (PRYEQNGETEQER).

The protein belongs to the peptidase C54 family.

It localises to the cytoplasm. Its subcellular location is the nucleus. The protein localises to the preautophagosomal structure. It catalyses the reaction [protein]-C-terminal L-amino acid-glycyl-phosphatidylethanolamide + H2O = [protein]-C-terminal L-amino acid-glycine + a 1,2-diacyl-sn-glycero-3-phosphoethanolamine. Its function is as follows. Cysteine protease that plays a key role in cytoplasm to vacuole transport (Cvt) and autophagy by mediating both proteolytic activation and delipidation of ATG8. Required for selective autophagic degradation of the nucleus (nucleophagy) as well as for mitophagy which contributes to regulate mitochondrial quantity and quality by eliminating the mitochondria to a basal level to fulfill cellular energy requirements and preventing excess ROS production. The protease activity is required for proteolytic activation of ATG8: cleaves the C-terminal amino acid of ATG8 to reveal a C-terminal glycine. ATG8 ubiquitin-like activity requires the exposure of the glycine at the C-terminus for its conjugation to phosphatidylethanolamine (PE) and its insertion to membranes, which is necessary for autophagy. The ATG8-PE conjugate mediates tethering between adjacent membranes and stimulates membrane hemifusion, leading to expansion of the autophagosomal membrane during autophagy. In addition to the protease activity, also catalyzes deconjugation of PE-conjugated forms of ATG8 during macroautophagy: ATG8 delipidation is required to release the protein from membranes, which facilitates multiple events during macroautophagy, and especially for efficient autophagosome biogenesis, the assembly of ATG9-containing tubulovesicular clusters into phagophores/autophagosomes, and for the disassembly of PAS-associated ATG components. ATG8 delipidation by ATG4 also recycles ATG8-PE generated on inappropriate membranes to maintain a reservoir of unlipidated ATG8 that is required for autophagosome formation at the PAS. This chain is Cysteine protease ATG4 (ATG4), found in Cryptococcus neoformans var. neoformans serotype D (strain JEC21 / ATCC MYA-565) (Filobasidiella neoformans).